The chain runs to 228 residues: NAD(P)H-hydrate epimerase (228 aa).

The YjeF N-terminal domain maps to 10 to 214 (AIDIDQELFN…DLERKYDLKI (205 aa)). 58–62 (NNGGD) contacts (6S)-NADPHX. K(+) contacts are provided by Asn59 and Asp123. Residues 127-133 (GFSFKPP) and Asp156 each bind (6S)-NADPHX. Ser159 is a K(+) binding site.

It belongs to the NnrE/AIBP family. Requires K(+) as cofactor.

The catalysed reaction is (6R)-NADHX = (6S)-NADHX. The enzyme catalyses (6R)-NADPHX = (6S)-NADPHX. Functionally, catalyzes the epimerization of the S- and R-forms of NAD(P)HX, a damaged form of NAD(P)H that is a result of enzymatic or heat-dependent hydration. This is a prerequisite for the S-specific NAD(P)H-hydrate dehydratase to allow the repair of both epimers of NAD(P)HX. The chain is NAD(P)H-hydrate epimerase from Pediculus humanus subsp. corporis (Body louse).